The primary structure comprises 583 residues: uncharacterized protein (583 aa).

This is an uncharacterized protein from Sinorhizobium fredii (strain NBRC 101917 / NGR234).